Here is a 70-residue protein sequence, read N- to C-terminus: Large ribosomal subunit protein bL28c (70 aa).

Belongs to the bacterial ribosomal protein bL28 family.

It localises to the plastid. It is found in the cyanelle. This chain is Large ribosomal subunit protein bL28c (rpl28), found in Cyanophora paradoxa.